The chain runs to 1307 residues: Contactin-associated protein like 5-3 (1307 aa).

Positions 1-24 (MDFVPRLNSVLTLVLSGLWHFGLT) are cleaved as a signal peptide. The Extracellular portion of the chain corresponds to 25-1238 (ATNCDNCDDP…PLTNAVLSDS (1214 aa)). One can recognise an F5/8 type C domain in the interval 31 to 175 (CDDPLASFLS…IGMRMEVYGC (145 aa)). C31 and C175 are joined by a disulfide. 2 consecutive Laminin G-like domains span residues 181–361 (VADF…TFSC) and 368–545 (PITF…IDLC). N-linked (GlcNAc...) asparagine glycosylation occurs at N283. A disulfide bridge connects residues C330 and C361. Residue N497 is glycosylated (N-linked (GlcNAc...) asparagine). Intrachain disulfides connect C513–C545, C551–C562, C556–C571, and C573–C583. The 38-residue stretch at 547-584 (IKDRCLPNYCEHGGHCVQTWTTFYCNCSNTGYTGATCH) folds into the EGF-like 1 domain. The region spanning 585–792 (DSIYEQSCEV…LRCYGDRHFW (208 aa)) is the Fibrinogen C-terminal domain. Residues N600, N624, and N637 are each glycosylated (N-linked (GlcNAc...) asparagine). In terms of domain architecture, Laminin G-like 3 spans 793-958 (NAVSFSTEAS…MVTSGVRPGC (166 aa)). Intrachain disulfides connect C931/C958, C962/C975, C969/C984, C986/C996, and C1165/C1200. One can recognise an EGF-like 2 domain in the interval 959–997 (PGHCSSYGNNCHNGGKCVEKHNSYSCDCTKSPYEGPFCQ). The Laminin G-like 4 domain occupies 1019–1200 (PVSKNTSTSS…VQGSLREFSC (182 aa)). The helical transmembrane segment at 1239–1259 (AVIGGVIAVVTFITFCVIGIM) threads the bilayer. Residues 1260–1307 (TRFLYQHKQSHCTSQKKEKEYSENLDSSFRHDIDLQSTTSKCKREYFI) are Cytoplasmic-facing.

It belongs to the neurexin family.

The protein localises to the membrane. Functionally, may play a role in the correct development and proper functioning of the peripheral and central nervous system and be involved in cell adhesion and intercellular communication. The sequence is that of Contactin-associated protein like 5-3 (Cntnap5c) from Rattus norvegicus (Rat).